Here is a 398-residue protein sequence, read N- to C-terminus: Succinate--CoA ligase [ADP-forming] subunit beta (398 aa).

Residues 9–254 (KALLGEFGVP…ETEEDAKEIE (246 aa)) form the ATP-grasp domain. ATP contacts are provided by residues Lys-46, 53-55 (GRG), Glu-109, Ser-112, and Glu-117. The Mg(2+) site is built by Asn-209 and Asp-223. Substrate is bound by residues Asn-274 and 331–333 (GIM).

The protein belongs to the succinate/malate CoA ligase beta subunit family. As to quaternary structure, heterotetramer of two alpha and two beta subunits. Mg(2+) is required as a cofactor.

The enzyme catalyses succinate + ATP + CoA = succinyl-CoA + ADP + phosphate. It carries out the reaction GTP + succinate + CoA = succinyl-CoA + GDP + phosphate. Its pathway is carbohydrate metabolism; tricarboxylic acid cycle; succinate from succinyl-CoA (ligase route): step 1/1. In terms of biological role, succinyl-CoA synthetase functions in the citric acid cycle (TCA), coupling the hydrolysis of succinyl-CoA to the synthesis of either ATP or GTP and thus represents the only step of substrate-level phosphorylation in the TCA. The beta subunit provides nucleotide specificity of the enzyme and binds the substrate succinate, while the binding sites for coenzyme A and phosphate are found in the alpha subunit. The protein is Succinate--CoA ligase [ADP-forming] subunit beta of Bradyrhizobium diazoefficiens (strain JCM 10833 / BCRC 13528 / IAM 13628 / NBRC 14792 / USDA 110).